The primary structure comprises 411 residues: Na(+)-translocating NADH-quinone reductase subunit B (411 aa).

3 consecutive transmembrane segments (helical) span residues 56-76 (IMITVWLCTFPAMFFGMYNAG), 121-141 (FLPIYLVTFAVGGFWEVLFAV), and 161-181 (ILPATIPLWQVALGITFGVVI). An FMN phosphoryl threonine modification is found at Thr228. The next 5 membrane-spanning stretches (helical) occupy residues 254 to 274 (FIPGSVGETSTLAILIGAAVL), 284 to 304 (IMLGVFVGMALTAMLFTAIGS), 309 to 329 (MFGMPWYWHLVLGGFAFGMVF), 345 to 365 (LLFGFLIGVMTVLIRVVNPAF), and 368 to 388 (GIMLAILFANLFAPMIDHFFV).

The protein belongs to the NqrB/RnfD family. As to quaternary structure, composed of six subunits; NqrA, NqrB, NqrC, NqrD, NqrE and NqrF. FMN is required as a cofactor.

The protein resides in the cell inner membrane. It carries out the reaction a ubiquinone + n Na(+)(in) + NADH + H(+) = a ubiquinol + n Na(+)(out) + NAD(+). Functionally, NQR complex catalyzes the reduction of ubiquinone-1 to ubiquinol by two successive reactions, coupled with the transport of Na(+) ions from the cytoplasm to the periplasm. NqrA to NqrE are probably involved in the second step, the conversion of ubisemiquinone to ubiquinol. In Chromohalobacter salexigens (strain ATCC BAA-138 / DSM 3043 / CIP 106854 / NCIMB 13768 / 1H11), this protein is Na(+)-translocating NADH-quinone reductase subunit B.